The chain runs to 66 residues: Sodium/potassium-transporting ATPase subunit gamma (66 aa).

A helical transmembrane segment spans residues 29 to 46; the sequence is GGLIFAGLAFVVGLLILL.

The protein belongs to the FXYD family. In terms of assembly, regulatory subunit of the sodium/potassium-transporting ATPase which is composed of a catalytic alpha subunit, an auxiliary non-catalytic beta subunit and an additional regulatory subunit. As to expression, highest levels expressed in the kidney and spleen. Restricted to the basolateral membrane in renal epithelial cells and varies in its level of expression along the nephron.

The protein resides in the membrane. May be involved in forming the receptor site for cardiac glycoside binding or may modulate the transport function of the sodium ATPase. The chain is Sodium/potassium-transporting ATPase subunit gamma (Fxyd2) from Rattus norvegicus (Rat).